A 121-amino-acid chain; its full sequence is Small ribosomal subunit protein uS13 (121 aa).

The tract at residues 91 to 121 (HRRGLPVRGQNSKNNARTRKGPRRTVANKKK) is disordered. Basic residues predominate over residues 106–121 (ARTRKGPRRTVANKKK).

It belongs to the universal ribosomal protein uS13 family. As to quaternary structure, part of the 30S ribosomal subunit. Forms a loose heterodimer with protein S19. Forms two bridges to the 50S subunit in the 70S ribosome.

Located at the top of the head of the 30S subunit, it contacts several helices of the 16S rRNA. In the 70S ribosome it contacts the 23S rRNA (bridge B1a) and protein L5 of the 50S subunit (bridge B1b), connecting the 2 subunits; these bridges are implicated in subunit movement. Contacts the tRNAs in the A and P-sites. In Bacillus cereus (strain ZK / E33L), this protein is Small ribosomal subunit protein uS13.